The sequence spans 238 residues: Aerobic respiration control protein ArcA (238 aa).

The 114-residue stretch at 5–118 (HILIVEDELV…ELTIRARNLL (114 aa)) folds into the Response regulatory domain. Aspartate 54 bears the 4-aspartylphosphate mark. Positions 134-234 (VESYKFNGWE…IHGEGYRFCG (101 aa)) form a DNA-binding region, ompR/PhoB-type.

Phosphorylated by ArcB.

It is found in the cytoplasm. Member of the two-component regulatory system ArcB/ArcA. Represses a wide variety of aerobic enzymes under anaerobic conditions. It may also be involved in the osmoregulation of envelope proteins. When activated by ArcB, it negatively regulates the expression of genes of aerobic function. Activates the transcription of the plfB operon by binding to its promoter. The sequence is that of Aerobic respiration control protein ArcA (arcA) from Escherichia coli O157:H7.